We begin with the raw amino-acid sequence, 268 residues long: CCAAT/enhancer-binding protein delta (268 aa).

Disordered regions lie at residues 1-48 (MSAA…LGST), 97-132 (GLEL…DAPG), and 152-219 (AAQP…NQEM). N-acetylserine is present on Ser-2. Lys-120 participates in a covalent cross-link: Glycyl lysine isopeptide (Lys-Gly) (interchain with G-Cter in SUMO). Residues 155–167 (PTPPTSPEPPRGS) show a composition bias toward pro residues. A compositionally biased stretch (basic and acidic residues) spans 177-201 (VREKGAGKRGPDRGSPEYRQRRERN). A bZIP domain is found at 191 to 254 (SPEYRQRRER…AGLRQFFKKL (64 aa)). Residues 195-222 (RQRRERNNIAVRKSRDKAKRRNQEMQQK) are basic motif. The segment at 226–254 (LSAENEKLHQRVEQLTRDLAGLRQFFKKL) is leucine-zipper.

Belongs to the bZIP family. C/EBP subfamily. In terms of assembly, binds DNA as a homodimer and as a heterodimer. Can form stable heterodimers with CEBPA, CEBPB and CEBPE. Directly interacts with SPI1/PU.1; this interaction does not affect DNA-binding properties of each partner. Interacts with PRDM16.

It is found in the nucleus. Functionally, transcription activator that recognizes two different DNA motifs: the CCAAT homology common to many promoters and the enhanced core homology common to many enhancers. Important transcription factor regulating the expression of genes involved in immune and inflammatory responses. Transcriptional activator that enhances IL6 transcription alone and as heterodimer with CEBPB. The polypeptide is CCAAT/enhancer-binding protein delta (Cebpd) (Mus musculus (Mouse)).